Here is a 328-residue protein sequence, read N- to C-terminus: D-cysteine desulfhydrase (328 aa).

Lysine 51 bears the N6-(pyridoxal phosphate)lysine mark.

The protein belongs to the ACC deaminase/D-cysteine desulfhydrase family. In terms of assembly, homodimer. Pyridoxal 5'-phosphate is required as a cofactor.

It carries out the reaction D-cysteine + H2O = hydrogen sulfide + pyruvate + NH4(+) + H(+). In terms of biological role, catalyzes the alpha,beta-elimination reaction of D-cysteine and of several D-cysteine derivatives. It could be a defense mechanism against D-cysteine. This Escherichia fergusonii (strain ATCC 35469 / DSM 13698 / CCUG 18766 / IAM 14443 / JCM 21226 / LMG 7866 / NBRC 102419 / NCTC 12128 / CDC 0568-73) protein is D-cysteine desulfhydrase.